A 412-amino-acid polypeptide reads, in one-letter code: Peptidase T (412 aa).

H83 contributes to the Zn(2+) binding site. D85 is a catalytic residue. Residue D145 participates in Zn(2+) binding. The active-site Proton acceptor is E179. E180, D202, and H384 together coordinate Zn(2+).

The protein belongs to the peptidase M20B family. It depends on Zn(2+) as a cofactor.

The protein resides in the cytoplasm. The enzyme catalyses Release of the N-terminal residue from a tripeptide.. Its function is as follows. Cleaves the N-terminal amino acid of tripeptides. The sequence is that of Peptidase T from Fusobacterium nucleatum subsp. nucleatum (strain ATCC 25586 / DSM 15643 / BCRC 10681 / CIP 101130 / JCM 8532 / KCTC 2640 / LMG 13131 / VPI 4355).